The following is a 400-amino-acid chain: DNA primase small subunit PriS (400 aa).

Residues Asp98, Asp100, and Asp306 contribute to the active site.

The protein belongs to the eukaryotic-type primase small subunit family. In terms of assembly, heterodimer of a small subunit (PriS) and a large subunit (PriL). It depends on Mg(2+) as a cofactor. Mn(2+) is required as a cofactor.

Catalytic subunit of DNA primase, an RNA polymerase that catalyzes the synthesis of short RNA molecules used as primers for DNA polymerase during DNA replication. The small subunit contains the primase catalytic core and has DNA synthesis activity on its own. Binding to the large subunit stabilizes and modulates the activity, increasing the rate of DNA synthesis while decreasing the length of the DNA fragments, and conferring RNA synthesis capability. The DNA polymerase activity may enable DNA primase to also catalyze primer extension after primer synthesis. May also play a role in DNA repair. The protein is DNA primase small subunit PriS of Methanocella arvoryzae (strain DSM 22066 / NBRC 105507 / MRE50).